A 78-amino-acid chain; its full sequence is Large ribosomal subunit protein bL28 (78 aa).

Belongs to the bacterial ribosomal protein bL28 family.

The polypeptide is Large ribosomal subunit protein bL28 (Methylococcus capsulatus (strain ATCC 33009 / NCIMB 11132 / Bath)).